Reading from the N-terminus, the 481-residue chain is Glutamate--tRNA ligase 1 (481 aa).

The 'HIGH' region motif lies at Pro-11–Gly-21. A 'KMSKS' region motif is present at residues Lys-244 to Arg-248. ATP is bound at residue Lys-247.

Belongs to the class-I aminoacyl-tRNA synthetase family. Glutamate--tRNA ligase type 1 subfamily. Monomer.

The protein resides in the cytoplasm. It carries out the reaction tRNA(Glu) + L-glutamate + ATP = L-glutamyl-tRNA(Glu) + AMP + diphosphate. Functionally, catalyzes the attachment of glutamate to tRNA(Glu) in a two-step reaction: glutamate is first activated by ATP to form Glu-AMP and then transferred to the acceptor end of tRNA(Glu). The chain is Glutamate--tRNA ligase 1 from Caldanaerobacter subterraneus subsp. tengcongensis (strain DSM 15242 / JCM 11007 / NBRC 100824 / MB4) (Thermoanaerobacter tengcongensis).